The following is a 488-amino-acid chain: Cobyric acid synthase (488 aa).

One can recognise a GATase cobBQ-type domain in the interval 248 to 435 (VLKVVVPVLP…LHGLFESPAA (188 aa)). Cys329 (nucleophile) is an active-site residue. His427 is an active-site residue.

The protein belongs to the CobB/CobQ family. CobQ subfamily.

It functions in the pathway cofactor biosynthesis; adenosylcobalamin biosynthesis. Catalyzes amidations at positions B, D, E, and G on adenosylcobyrinic A,C-diamide. NH(2) groups are provided by glutamine, and one molecule of ATP is hydrogenolyzed for each amidation. This chain is Cobyric acid synthase, found in Pseudomonas fluorescens (strain Pf0-1).